The chain runs to 315 residues: Rhomboid-related protein 4 (315 aa).

The Cytoplasmic segment spans residues 1-21; the sequence is MQRRTRGINTGLLLLLSQVFQ. A helical transmembrane segment spans residues 22 to 42; it reads IGINNIPPVTLATLAVNVWFF. Residues 43–103 are Lumenal-facing; that stretch reads LNPWKPLYHS…KLERRLGSRW (61 aa). Residues 104-124 traverse the membrane as a helical segment; sequence FAYVIATFSLLTGVVYLLLQF. Topologically, residues 125–137 are cytoplasmic; the sequence is TVAELLNQPDFKR. The chain crosses the membrane as a helical span at residues 138-154; that stretch reads NCAVGFSGVLFALKVLS. The Nucleophile role is filled by S144. At 155-180 the chain is on the lumenal side; the sequence is NHYCPGGFVNILGFPVPNRFACWAEL. Residues 181-201 form a helical membrane-spanning segment; sequence VAIHFCTPGTSFAGHLAGILV. H195 is a catalytic residue. Residues 202 to 315 are Cytoplasmic-facing; the sequence is GLMYTQGPLK…RQRLHRFDGQ (114 aa). The tract at residues 269 to 284 is ubiquitin-binding domain (UBD); sequence SEEEQLERALRASIWD. Positions 301 to 315 are VCP/p97-interacting motif (VIM); sequence PEEMRRQRLHRFDGQ.

Belongs to the peptidase S54 family. As to quaternary structure, interacts with BIK and STEAP3. Interacts (via C-terminal domain) with VCP/P97. Interacts with ubiquitin and ubiquitinated proteins. As to expression, expressed in testis (at protein level). Expressed in intestine, lung, brain, kidney, epididymis, stomach, muscle, spleen, liver, heart and testis.

It is found in the endoplasmic reticulum membrane. The protein localises to the mitochondrion membrane. It catalyses the reaction Cleaves type-1 transmembrane domains using a catalytic dyad composed of serine and histidine that are contributed by different transmembrane domains.. With respect to regulation, inhibited by aprotinin. Intramembrane-cleaving serine protease that cleaves single transmembrane or multi-pass membrane proteins in the hydrophobic plane of the membrane, luminal loops and juxtamembrane regions. Involved in regulated intramembrane proteolysis and the subsequent release of functional polypeptides from their membrane anchors. Functional component of endoplasmic reticulum-associated degradation (ERAD) for misfolded membrane proteins. Required for the degradation process of some specific misfolded endoplasmic reticulum (ER) luminal proteins. Participates in the transfer of misfolded proteins from the ER to the cytosol, where they are destroyed by the proteasome in a ubiquitin-dependent manner. Functions in BIK, MPZ, PKD1, PTCRA, RHO, STEAP3 and TRAC processing. Involved in the regulation of exosomal secretion; inhibits the TSAP6-mediated secretion pathway. Involved in the regulation of apoptosis; modulates BIK-mediated apoptotic activity. Also plays a role in the regulation of spermatogenesis; inhibits apoptotic activity in spermatogonia. In Mus musculus (Mouse), this protein is Rhomboid-related protein 4 (Rhbdd1).